The primary structure comprises 480 residues: Proline--tRNA ligase (480 aa).

The protein belongs to the class-II aminoacyl-tRNA synthetase family. ProS type 3 subfamily. As to quaternary structure, homodimer.

It is found in the cytoplasm. The enzyme catalyses tRNA(Pro) + L-proline + ATP = L-prolyl-tRNA(Pro) + AMP + diphosphate. Its function is as follows. Catalyzes the attachment of proline to tRNA(Pro) in a two-step reaction: proline is first activated by ATP to form Pro-AMP and then transferred to the acceptor end of tRNA(Pro). This chain is Proline--tRNA ligase, found in Chloroflexus aggregans (strain MD-66 / DSM 9485).